A 741-amino-acid chain; its full sequence is Catalase-peroxidase (741 aa).

Positions 1–23 (MLKKIVTALGMSGMLLASSNAIA) are cleaved as a signal peptide. Positions 102-223 (WHDAGTYRIY…YAATQMGLIY (122 aa)) form a cross-link, tryptophyl-tyrosyl-methioninium (Trp-Tyr) (with M-249). The active-site Proton acceptor is the histidine 103. The tryptophyl-tyrosyl-methioninium (Tyr-Met) (with W-102) cross-link spans 223-249 (YVNPEGPDGKPDIKGAASEIRQAFRAM). Heme b is bound at residue histidine 264.

It belongs to the peroxidase family. Peroxidase/catalase subfamily. In terms of assembly, homodimer or homotetramer. Heme b serves as cofactor. Post-translationally, formation of the three residue Trp-Tyr-Met cross-link is important for the catalase, but not the peroxidase activity of the enzyme.

It catalyses the reaction H2O2 + AH2 = A + 2 H2O. It carries out the reaction 2 H2O2 = O2 + 2 H2O. In terms of biological role, bifunctional enzyme with both catalase and broad-spectrum peroxidase activity. In Francisella tularensis subsp. tularensis (strain WY96-3418), this protein is Catalase-peroxidase.